Here is a 20-residue protein sequence, read N- to C-terminus: Conotoxin PnMLKM-D0211 (20 aa).

Positions 1 to 3 are excised as a propeptide; it reads VKR. 3 disulfides stabilise this stretch: cysteine 4-cysteine 18, cysteine 5-cysteine 14, and cysteine 10-cysteine 17. Proline 16 bears the 4-hydroxyproline mark. A Tryptophan amide modification is found at tryptophan 19.

Belongs to the conotoxin M superfamily. As to expression, expressed by the venom duct.

The protein resides in the secreted. The chain is Conotoxin PnMLKM-D0211 from Conus pennaceus (Feathered cone).